A 97-amino-acid chain; its full sequence is MYIENNSLVLIIPETNSITPQLFTIHDNKPICVCSRYSLIPSKKENVQISYIDNIHMYFRSFKNLYLVNPRNHDIIKVFNFLKNYKWGGNFYLLFNV.

Belongs to the chordopoxvirinae A15 family. In terms of assembly, part of a complex composed of A30, G7, F10 kinase, A15, D2, D3, and J1.

The protein localises to the host cytoplasm. It is found in the virion. Functionally, late protein which is a part of a large complex required for early virion morphogenesis. This complex participates in the formation of virosomes and the incorporation of virosomal contents into nascent immature virions. A15 is required for the stability and kinase activity of F10. The sequence is that of Core protein A15 homolog from Vertebrata (FPV).